A 150-amino-acid polypeptide reads, in one-letter code: UPF0756 membrane protein YE1142 (150 aa).

4 helical membrane-spanning segments follow: residues 1-21, 51-71, 88-108, and 114-134; these read MAALDPTLLILLVLAGLGIIS, YGLTIGILILTIGVMTPIASG, ILAIVVGVAVSWLGGRGVSLM, and VVAGLLVGTVLGVALFRGVPV.

This sequence belongs to the UPF0756 family.

It localises to the cell membrane. This Yersinia enterocolitica serotype O:8 / biotype 1B (strain NCTC 13174 / 8081) protein is UPF0756 membrane protein YE1142.